A 381-amino-acid polypeptide reads, in one-letter code: O-phospho-L-seryl-tRNA:Cys-tRNA synthase (381 aa).

Residues 86–87 (AR), N192, and 215–217 (SGH) contribute to the pyridoxal 5'-phosphate site. K218 is modified (N6-(pyridoxal phosphate)lysine).

The protein belongs to the SepCysS family. As to quaternary structure, homodimer. Interacts with SepRS. Pyridoxal 5'-phosphate serves as cofactor.

The catalysed reaction is O-phospho-L-seryl-tRNA(Cys) + hydrogen sulfide + H(+) = L-cysteinyl-tRNA(Cys) + phosphate. Its function is as follows. Converts O-phospho-L-seryl-tRNA(Cys) (Sep-tRNA(Cys)) to L-cysteinyl-tRNA(Cys) (Cys-tRNA(Cys)). The polypeptide is O-phospho-L-seryl-tRNA:Cys-tRNA synthase (Methanococcus vannielii (strain ATCC 35089 / DSM 1224 / JCM 13029 / OCM 148 / SB)).